The chain runs to 1094 residues: Carbamoyl phosphate synthase large chain (1094 aa).

Residues 1–402 (MPRRSDLHRI…AFQKALRALE (402 aa)) are carboxyphosphate synthetic domain. Arg-129, Arg-169, Gly-175, Gly-176, Arg-208, Leu-210, Glu-215, Gly-241, Val-242, His-243, Gln-285, and Glu-299 together coordinate ATP. The 196-residue stretch at 133 to 328 (GEAMEKIGLR…IARIGAKLAV (196 aa)) folds into the ATP-grasp 1 domain. Gln-285, Glu-299, and Asn-301 together coordinate Mg(2+). Mn(2+) is bound by residues Gln-285, Glu-299, and Asn-301. Residues 403–552 (TGRSGWTIAE…YLYGNYDEES (150 aa)) form an oligomerization domain region. Residues 553–936 (EAATEGRKKV…AFMKSQLAAD (384 aa)) form a carbamoyl phosphate synthetic domain region. Residues 679–870 (EAIARELGIE…LPSVAARLML (192 aa)) enclose the ATP-grasp 2 domain. 10 residues coordinate ATP: Arg-715, Arg-754, Leu-756, Glu-761, Gly-786, Ile-787, His-788, Ser-789, Gln-829, and Glu-841. Residues Gln-829, Glu-841, and Asn-843 each contribute to the Mg(2+) site. Mn(2+) contacts are provided by Gln-829, Glu-841, and Asn-843. The MGS-like domain occupies 937–1077 (NALPREGTVF…QEWHEILRAP (141 aa)). The segment at 937-1094 (NALPREGTVF…AGSTQPAGVA (158 aa)) is allosteric domain.

It belongs to the CarB family. As to quaternary structure, composed of two chains; the small (or glutamine) chain promotes the hydrolysis of glutamine to ammonia, which is used by the large (or ammonia) chain to synthesize carbamoyl phosphate. Tetramer of heterodimers (alpha,beta)4. Mg(2+) is required as a cofactor. The cofactor is Mn(2+).

It catalyses the reaction hydrogencarbonate + L-glutamine + 2 ATP + H2O = carbamoyl phosphate + L-glutamate + 2 ADP + phosphate + 2 H(+). It carries out the reaction hydrogencarbonate + NH4(+) + 2 ATP = carbamoyl phosphate + 2 ADP + phosphate + 2 H(+). Its pathway is amino-acid biosynthesis; L-arginine biosynthesis; carbamoyl phosphate from bicarbonate: step 1/1. It participates in pyrimidine metabolism; UMP biosynthesis via de novo pathway; (S)-dihydroorotate from bicarbonate: step 1/3. Its function is as follows. Large subunit of the glutamine-dependent carbamoyl phosphate synthetase (CPSase). CPSase catalyzes the formation of carbamoyl phosphate from the ammonia moiety of glutamine, carbonate, and phosphate donated by ATP, constituting the first step of 2 biosynthetic pathways, one leading to arginine and/or urea and the other to pyrimidine nucleotides. The large subunit (synthetase) binds the substrates ammonia (free or transferred from glutamine from the small subunit), hydrogencarbonate and ATP and carries out an ATP-coupled ligase reaction, activating hydrogencarbonate by forming carboxy phosphate which reacts with ammonia to form carbamoyl phosphate. The sequence is that of Carbamoyl phosphate synthase large chain from Gemmatimonas aurantiaca (strain DSM 14586 / JCM 11422 / NBRC 100505 / T-27).